The sequence spans 240 residues: Uridylate kinase (240 aa).

12–15 (KLSG) contacts ATP. Residues 20–25 (GEKGFG) are involved in allosteric activation by GTP. G54 lines the UMP pocket. 2 residues coordinate ATP: G55 and R59. Residues D74 and 135–142 (TGSPYFST) each bind UMP. ATP contacts are provided by N163, Y169, and D172.

Belongs to the UMP kinase family. Homohexamer.

It localises to the cytoplasm. The enzyme catalyses UMP + ATP = UDP + ADP. It participates in pyrimidine metabolism; CTP biosynthesis via de novo pathway; UDP from UMP (UMPK route): step 1/1. With respect to regulation, allosterically activated by GTP. Inhibited by UTP. Catalyzes the reversible phosphorylation of UMP to UDP. The chain is Uridylate kinase from Limosilactobacillus reuteri (Lactobacillus reuteri).